The following is a 212-amino-acid chain: Transmembrane emp24 domain-containing protein p24delta4 (212 aa).

An N-terminal signal peptide occupies residues 1 to 25 (MKKKMIPTTILLSALIFSLSPICEA). The Lumenal portion of the chain corresponds to 26-179 (VWLTVPHTGS…RIVSEKTNSR (154 aa)). The 113-residue stretch at 35–147 (SKCVSEEIQS…IEGVELEFKK (113 aa)) folds into the GOLD domain. Asparagine 82 is a glycosylation site (N-linked (GlcNAc...) asparagine). The stretch at 133–155 (ARKEKIEGVELEFKKLEGAVEAI) forms a coiled coil. 2 positions are modified to omega-N-methylated arginine: arginine 165 and arginine 170. A helical transmembrane segment spans residues 180–200 (VAWYSIMSLGICIVVSGLQIL). The Cytoplasmic portion of the chain corresponds to 201-212 (YLKQYFEKKKLI). The short motif at 205–206 (YF) is the COPII vesicle coat-binding element. Positions 205–212 (YFEKKKLI) match the COPI vesicle coat-binding motif.

This sequence belongs to the EMP24/GP25L family. As to quaternary structure, probably oligomerizes with other members of the EMP24/GP25L family. Associates with the COPI vesicle coat (coatomer). Associates with the COPII vesicle coat (coatomer).

It is found in the endoplasmic reticulum membrane. The protein localises to the golgi apparatus membrane. Its function is as follows. Involved in vesicular protein trafficking. Mainly functions in the early secretory pathway. Required for trafficking GLL23, a component of the PYK10 complex. May act as a receptor facilitating its packing into COPII carriers and export from the endoplasmic reticulum. The polypeptide is Transmembrane emp24 domain-containing protein p24delta4 (CYB) (Arabidopsis thaliana (Mouse-ear cress)).